The sequence spans 456 residues: Histidine--tRNA ligase (456 aa).

It belongs to the class-II aminoacyl-tRNA synthetase family. In terms of assembly, homodimer.

Its subcellular location is the cytoplasm. It carries out the reaction tRNA(His) + L-histidine + ATP = L-histidyl-tRNA(His) + AMP + diphosphate + H(+). This Christiangramia forsetii (strain DSM 17595 / CGMCC 1.15422 / KT0803) (Gramella forsetii) protein is Histidine--tRNA ligase.